We begin with the raw amino-acid sequence, 148 residues long: Snaclec crotocetin (148 aa).

Positions 1–23 are cleaved as a signal peptide; it reads MGRLVFVSFGLLVVFLSLTGTGA. 3 cysteine pairs are disulfide-bonded: C27-C38, C55-C144, and C121-C136. In terms of domain architecture, C-type lectin spans 34-145; the sequence is YEGHCYKVFK…CSKTHKVVCK (112 aa).

It belongs to the snaclec family. Heterodimer; disulfide-linked. In terms of tissue distribution, expressed by the venom gland.

It localises to the secreted. In terms of biological role, interferes with one step of hemostasis (modulation of platelet aggregation, or coagulation cascade, for example). This Crotalus durissus terrificus (South American rattlesnake) protein is Snaclec crotocetin.